Consider the following 214-residue polypeptide: Homeobox protein HEX homolog pha-2 (214 aa).

2 disordered regions span residues 1–50 (MDQK…QKME) and 180–214 (RRVR…LSHG). The segment covering 24–34 (SSESPIPTGSE) has biased composition (low complexity). Polar residues predominate over residues 35–44 (CSLNESSDTT). Residues 124 to 183 (RKGGQIRFTNEQTDALEHKFDSHKYLSPQERKKLAKSLSLSERQVKTWFQNRRAKWRRVR) constitute a DNA-binding region (homeobox). Over residues 200 to 214 (SLGQLQSSNPFLSHG) the composition is skewed to polar residues.

Its subcellular location is the nucleus. Its function is as follows. Transcriptional repressor. Involved in pharyngeal development and required for the formation of the pharyngeal isthmus. Plays a role in modulating cytoskeleton in the muscle cells of the isthmus. Regulates expression of the acetylcholinesterase genes ace-1 and ace-2. May regulate its own expression. The polypeptide is Homeobox protein HEX homolog pha-2 (Caenorhabditis elegans).